The following is a 194-amino-acid chain: dTTP/UTP pyrophosphatase (194 aa).

Aspartate 76 functions as the Proton acceptor in the catalytic mechanism.

This sequence belongs to the Maf family. YhdE subfamily. Requires a divalent metal cation as cofactor.

The protein localises to the cytoplasm. It carries out the reaction dTTP + H2O = dTMP + diphosphate + H(+). It catalyses the reaction UTP + H2O = UMP + diphosphate + H(+). Its function is as follows. Nucleoside triphosphate pyrophosphatase that hydrolyzes dTTP and UTP. May have a dual role in cell division arrest and in preventing the incorporation of modified nucleotides into cellular nucleic acids. This Shewanella sp. (strain MR-7) protein is dTTP/UTP pyrophosphatase.